A 149-amino-acid chain; its full sequence is Small ribosomal subunit protein bS6 (149 aa).

The disordered stretch occupies residues 93 to 149 (VGKHEEGPSAMMQKRDRDDRPRRDGDRPDRGGFGDRGPRPDRGDRDDRPRRPREDRA). A compositionally biased stretch (basic and acidic residues) spans 94–149 (GKHEEGPSAMMQKRDRDDRPRRDGDRPDRGGFGDRGPRPDRGDRDDRPRRPREDRA).

Belongs to the bacterial ribosomal protein bS6 family.

Its function is as follows. Binds together with bS18 to 16S ribosomal RNA. The chain is Small ribosomal subunit protein bS6 from Rhizobium meliloti (strain 1021) (Ensifer meliloti).